Here is a 300-residue protein sequence, read N- to C-terminus: B1 kinase (300 aa).

Residues 16 to 282 (WVVGPLIGKG…ITMVNSLTYF (267 aa)) enclose the Protein kinase domain. ATP is bound by residues 22–30 (IGKGGFGSI) and lysine 45. Aspartate 147 functions as the Proton acceptor in the catalytic mechanism.

This sequence belongs to the protein kinase superfamily. Ser/Thr protein kinase family. Poxviruses subfamily. As to quaternary structure, interacts with host JIP1; this interaction increases the amount of MAPK bound to JIP1 and subsequently increases the activity of transcription factors, such as JUN, that respond to these complexes. Interacts with protein OPG198; this interaction inhibits the repressive activity of OPG198 pseudokinase on viral replication factory formation. Mg(2+) is required as a cofactor. In terms of processing, autophosphorylated.

It localises to the virion. It is found in the host cytoplasm. It carries out the reaction L-seryl-[protein] + ATP = O-phospho-L-seryl-[protein] + ADP + H(+). The enzyme catalyses L-threonyl-[protein] + ATP = O-phospho-L-threonyl-[protein] + ADP + H(+). Functionally, essential serine/threonine-protein kinase that plays different role in the viral life cycle. Phosphorylates the host small ribosomal protein RACK1 thereby customizing the ribosomes to a state optimal for viral mRNAs (which contain poly-A leaders) but not for host mRNAs. Facilitates viral DNA replication by inhibiting host BANF1, a cellular host defense responsive to foreign DNA. Phosphorylates host BANF1 on serine and threonine residues; this leads to BANF1 relocalization to the cytoplasm, loss of dimerization and impaired DNA binding activity. Indeed, BANF1 activity depends on its DNA-binding property which is blocked by VPK1-mediated phosphorylation. Required for viral intermediate genes expression, probably by inhibiting host BANF1. Modulates cellular responses via host JUN by two different mechanisms, either by direct phosphorylation or by modulation of upstream JIP1-MAPK complexes. Seems to participate in the accumulation/processing of late proteins and thus in virion maturation. In addition, inhibits B12 repressive activity on viral DNA replication via a phosphorylation-dependent mechanism. This Bos taurus (Bovine) protein is B1 kinase (OPG187).